We begin with the raw amino-acid sequence, 875 residues long: Receptor-like protein 33 (875 aa).

A signal peptide spans 1–23 (MSLIPITFYFLFLFFSNFRGVFA). At 24–822 (VPNIHLCHFE…GESETLESEQ (799 aa)) the chain is on the extracellular side. N65, N103, N133, N146, and N181 each carry an N-linked (GlcNAc...) asparagine glycan. LRR repeat units follow at residues 110 to 133 (FHFL…SIGN), 134 to 157 (LSHL…SLGN), 159 to 182 (FHLT…LGNL), 183 to 205 (SYLT…SFGS), 206 to 230 (LNQL…VINL), 231 to 254 (TKLS…ITSL), 256 to 278 (ILES…LFTI), 280 to 302 (SITL…NISS), 303 to 327 (PSNL…ISRL), and 329 to 351 (NLRT…IFSH). N-linked (GlcNAc...) asparagine glycans are attached at residues N229 and N250. The N-linked (GlcNAc...) asparagine glycan is linked to N299. An LRR 11; degenerate repeat occupies 352–377 (LKLLGNLYLSHSNTTTTIDLNAVLSC). N-linked (GlcNAc...) asparagine glycosylation is found at N364, N395, and N411. LRR repeat units follow at residues 378–401 (FKML…SVSD), 404–427 (LGLI…LRTQ), 428–451 (RQMR…LLLQ), 455–477 (MHIS…TVVP), 479–502 (PSMK…ICSL), 503–528 (RSLI…KFKS), 530–549 (LSDL…KTII), 550–573 (KSLR…LIHF), 575–596 (TLEV…WLSS), 597–619 (LKKL…KTRF), 620–643 (PKLR…CFVE), 686–710 (LKIY…IGLL), 711–734 (KELH…MGNL), 735–758 (RELE…LGNL), and 760–783 (YLAY…QFRT). N-linked (GlcNAc...) asparagine glycans are attached at residues N490 and N514. N-linked (GlcNAc...) asparagine glycosylation is present at N587. N633 carries N-linked (GlcNAc...) asparagine glycosylation. N717, N757, and N765 each carry an N-linked (GlcNAc...) asparagine glycan. A helical transmembrane segment spans residues 823-843 (VLSWIAAAIGFTPGIVLGLTI). Residues 844–875 (GHIVLSSKPRWFFKVLYINNSRRRRRTRSEKS) are Cytoplasmic-facing.

This sequence belongs to the RLP family.

It is found in the cell membrane. This Arabidopsis thaliana (Mouse-ear cress) protein is Receptor-like protein 33.